Consider the following 104-residue polypeptide: Small ribosomal subunit protein uS10 (104 aa).

Belongs to the universal ribosomal protein uS10 family. As to quaternary structure, part of the 30S ribosomal subunit.

Involved in the binding of tRNA to the ribosomes. This Gloeobacter violaceus (strain ATCC 29082 / PCC 7421) protein is Small ribosomal subunit protein uS10.